Consider the following 828-residue polypeptide: Beta-galactosidase 13 (828 aa).

An N-terminal signal peptide occupies residues Met-1–Ala-23. N-linked (GlcNAc...) asparagine glycosylation is present at Asn-157. Glu-187 acts as the Proton donor in catalysis. Residues Asn-198 and Asn-249 are each glycosylated (N-linked (GlcNAc...) asparagine). The active-site Nucleophile is the Glu-259. Asn-260, Asn-362, Asn-366, Asn-392, Asn-502, Asn-578, Asn-586, and Asn-615 each carry an N-linked (GlcNAc...) asparagine glycan. Residues Ala-746 to Cys-828 enclose the SUEL-type lectin domain.

It belongs to the glycosyl hydrolase 35 family.

The protein resides in the secreted. It is found in the extracellular space. Its subcellular location is the apoplast. It catalyses the reaction Hydrolysis of terminal non-reducing beta-D-galactose residues in beta-D-galactosides.. The protein is Beta-galactosidase 13 of Oryza sativa subsp. japonica (Rice).